The following is a 460-amino-acid chain: U-box domain-containing protein 9 (460 aa).

The 75-residue stretch at 73–147 folds into the U-box domain; it reads SCPEEFRCPL…SKWCKKNGLE (75 aa). ARM repeat units follow at residues 201 to 244, 248 to 287, and 289 to 328; these read TEFR…NISI, SNKKLVCENPNVIPLLIDALRRGTVATRSNAAAAIFTLSA, and DSNKVLIGKSGILKPLIDLLEEGNPLAIKDVAAAIFTLCI.

Binds to SD11, SD16, SD17, SD18, SD113, SD129 and SD25. Phosphorylated by SD1-6 and SD1-7.

The protein resides in the nucleus. The protein localises to the cell membrane. The catalysed reaction is S-ubiquitinyl-[E2 ubiquitin-conjugating enzyme]-L-cysteine + [acceptor protein]-L-lysine = [E2 ubiquitin-conjugating enzyme]-L-cysteine + N(6)-ubiquitinyl-[acceptor protein]-L-lysine.. Its pathway is protein modification; protein ubiquitination. Functions as an E3 ubiquitin ligase. May be involved in the abscisic acid-mediated signaling pathway, at least during germination. This chain is U-box domain-containing protein 9 (PUB9), found in Arabidopsis thaliana (Mouse-ear cress).